The following is a 163-amino-acid chain: NADH-quinone oxidoreductase subunit I (163 aa).

2 consecutive 4Fe-4S ferredoxin-type domains span residues 55-84 and 94-123; these read RRYP…IDAE and TRYD…EGPN. [4Fe-4S] cluster contacts are provided by Cys64, Cys67, Cys70, Cys74, Cys103, Cys106, Cys109, and Cys113.

It belongs to the complex I 23 kDa subunit family. NDH-1 is composed of 14 different subunits. Subunits NuoA, H, J, K, L, M, N constitute the membrane sector of the complex. It depends on [4Fe-4S] cluster as a cofactor.

It is found in the cell inner membrane. It carries out the reaction a quinone + NADH + 5 H(+)(in) = a quinol + NAD(+) + 4 H(+)(out). Its function is as follows. NDH-1 shuttles electrons from NADH, via FMN and iron-sulfur (Fe-S) centers, to quinones in the respiratory chain. The immediate electron acceptor for the enzyme in this species is believed to be ubiquinone. Couples the redox reaction to proton translocation (for every two electrons transferred, four hydrogen ions are translocated across the cytoplasmic membrane), and thus conserves the redox energy in a proton gradient. The protein is NADH-quinone oxidoreductase subunit I (nuoI) of Rhodobacter capsulatus (Rhodopseudomonas capsulata).